The primary structure comprises 334 residues: Protein CUP-SHAPED COTYLEDON 3 (334 aa).

Positions 22 to 171 constitute an NAC domain; the sequence is LPPGFRFHPT…EWVICRVFNK (150 aa). The DNA-binding element occupies 121-177; it reads VGMKKTLVFYKGRAPRGLKTKWVMHEYRLENDHSHRHTCKEEWVICRVFNKTGDRKN.

In terms of tissue distribution, in a general manner, present at the boundaries between mersitems and araising primordia.

The protein localises to the nucleus. Functionally, transcription activator. Involved in molecular mechanisms regulating shoot apical meristem (SAM) formation during embryogenesis and organ separation. Required for axillary meristem initiation and separation of the meristem from the main stem. May act as an inhibitor of cell division. This chain is Protein CUP-SHAPED COTYLEDON 3 (NAC031), found in Arabidopsis thaliana (Mouse-ear cress).